Here is a 215-residue protein sequence, read N- to C-terminus: Cytochrome b6 (215 aa).

Residues 32–52 (IFYCIGGITFTCFIMQVASGF) traverse the membrane as a helical segment. Position 35 (Cys35) interacts with heme c. Heme b-binding residues include His86 and His100. The next 3 membrane-spanning stretches (helical) occupy residues 90–110 (ASMMVLTMILHVFRVYLTGGF), 116–136 (LTWVTGVILAVCTVSFGVTGY), and 186–206 (LHTFVLPLLTAVFMLAHFLMI). 2 residues coordinate heme b: His187 and His202.

Belongs to the cytochrome b family. PetB subfamily. As to quaternary structure, the 4 large subunits of the cytochrome b6-f complex are cytochrome b6, subunit IV (17 kDa polypeptide, PetD), cytochrome f and the Rieske protein, while the 4 small subunits are PetG, PetL, PetM and PetN. The complex functions as a dimer. It depends on heme b as a cofactor. Requires heme c as cofactor.

The protein resides in the plastid. The protein localises to the chloroplast thylakoid membrane. Functionally, component of the cytochrome b6-f complex, which mediates electron transfer between photosystem II (PSII) and photosystem I (PSI), cyclic electron flow around PSI, and state transitions. The polypeptide is Cytochrome b6 (Mesostigma viride (Green alga)).